A 1028-amino-acid polypeptide reads, in one-letter code: RNA cytidine acetyltransferase 1 (1028 aa).

ATP-binding positions include 286 to 295 (GRGKSAALGL) and Arg460. The N-acetyltransferase domain maps to 548–731 (VLLGPVDESK…FAPFYISQIP (184 aa)). Acetyl-CoA is bound by residues 619 to 621 (IAV), 626 to 632 (MKMGYGS), and Lys719. A disordered region spans residues 989–1028 (ISIESTKTDNKKEKPSGFDKSAKKRGNDKHSSTSNKKRRA). The segment covering 994–1009 (TKTDNKKEKPSGFDKS) has biased composition (basic and acidic residues).

This sequence belongs to the RNA cytidine acetyltransferase family. NAT10 subfamily.

The protein localises to the nucleus. The protein resides in the nucleolus. The catalysed reaction is a cytidine in 18S rRNA + acetyl-CoA + ATP + H2O = an N(4)-acetylcytidine in 18S rRNA + ADP + phosphate + CoA + H(+). It carries out the reaction a cytidine in tRNA + acetyl-CoA + ATP + H2O = an N(4)-acetylcytidine in tRNA + ADP + phosphate + CoA + H(+). Functionally, RNA cytidine acetyltransferase with specificity toward both 18S rRNA and tRNAs. Catalyzes the formation of N(4)-acetylcytidine (ac4C) in 18S rRNA. Required for early nucleolar cleavages of precursor rRNA at sites A0, A1 and A2 during 18S rRNA synthesis. Catalyzes the formation of ac4C in serine and leucine tRNAs. Requires a tRNA-binding adapter protein for full tRNA acetyltransferase activity but not for 18S rRNA acetylation. The polypeptide is RNA cytidine acetyltransferase 1 (Arabidopsis thaliana (Mouse-ear cress)).